Consider the following 496-residue polypeptide: MELQISSAIIILVATFVASLLIKQWRKSESRQNLPPGPPKLPLVGHLHLLWGKLPQHAMADMAKKYGPVTHVQLGEVFSVVLSSREATKEAMKLLDPACADRFESIGTRIMWYDNDDIIFSPYSDHWRQMRKICVSELLSARNVRSFGFIRQDEMSRLLRHLQSSAGETVDMTERIATLTCSIICRAAFGAIINDHEELVELVKDSLSMASGFELADLFPSSKLLNLLCWNKSKLWRMRRRVDTILEAIVDEHKLKKSGEFGGEDIIDVLFRMQKDSQIKVPITTNAIKAFIFDTFSAGTETSSTTTLWVMAELMRNPAVMAKAQAEVRAALKGKTSVDVDDVQELKYMKSVVKETMRMHPPIPLIPRSCREECEVNGYKIPNKARIMINVWSMGRNPLYWEKPETFWPERFDQVSRDFMGSDFEFIPFGAGRRICPGLNFGLANVEVPLAQLLYHFDWKLAEGMKPSDMDMSEAEGLTGIRKNNLLLVPTLYKSP.

A helical; Signal-anchor transmembrane segment spans residues 2–22 (ELQISSAIIILVATFVASLLI). C436 lines the heme pocket.

It belongs to the cytochrome P450 family. Heme is required as a cofactor.

The protein localises to the endoplasmic reticulum membrane. It catalyses the reaction (4S)-limonene + reduced [NADPH--hemoprotein reductase] + O2 = (1S,6R)-isopiperitenol + oxidized [NADPH--hemoprotein reductase] + H2O + H(+). Its function is as follows. Hydroxylates both (+)- and (-)-limonene to (+) and (-)-trans-isopiperitenol. The polypeptide is Cytochrome P450 71D95 (CYP71D95) (Mentha spicata (Spearmint)).